The sequence spans 161 residues: Hydrogenase expression/formation protein HoxO (161 aa).

Belongs to the HupG/HyaE family.

This Cupriavidus necator (strain ATCC 17699 / DSM 428 / KCTC 22496 / NCIMB 10442 / H16 / Stanier 337) (Ralstonia eutropha) protein is Hydrogenase expression/formation protein HoxO (hoxO).